A 168-amino-acid chain; its full sequence is 6,7-dimethyl-8-ribityllumazine synthase (168 aa).

5-amino-6-(D-ribitylamino)uracil is bound by residues phenylalanine 24, 58–60 (ALE), and 82–84 (AVI). 87–88 (ET) provides a ligand contact to (2S)-2-hydroxy-3-oxobutyl phosphate. Histidine 90 functions as the Proton donor in the catalytic mechanism. 5-amino-6-(D-ribitylamino)uracil is bound at residue asparagine 115. Arginine 129 lines the (2S)-2-hydroxy-3-oxobutyl phosphate pocket.

This sequence belongs to the DMRL synthase family.

The enzyme catalyses (2S)-2-hydroxy-3-oxobutyl phosphate + 5-amino-6-(D-ribitylamino)uracil = 6,7-dimethyl-8-(1-D-ribityl)lumazine + phosphate + 2 H2O + H(+). It functions in the pathway cofactor biosynthesis; riboflavin biosynthesis; riboflavin from 2-hydroxy-3-oxobutyl phosphate and 5-amino-6-(D-ribitylamino)uracil: step 1/2. Its function is as follows. Catalyzes the formation of 6,7-dimethyl-8-ribityllumazine by condensation of 5-amino-6-(D-ribitylamino)uracil with 3,4-dihydroxy-2-butanone 4-phosphate. This is the penultimate step in the biosynthesis of riboflavin. In Paraburkholderia xenovorans (strain LB400), this protein is 6,7-dimethyl-8-ribityllumazine synthase.